Consider the following 414-residue polypeptide: MHYCVLSAFLLLHLVTAALSLSTCSTLDMDQFMRKRIEAIRGQILSKLKLTSPPEDYPEPEEVPPEVISIYNSTRDLLQEKASRRAAACERERSDEEYYAKEVYKIDMPPFFPSENAIPPTFYRPYFRIVRFDVSAMEKNASNLVKAEFRVFRLQNPKARVPEQRIELYQILKSKDLTSPTQRYIDSKVVKTRAEGEWLSFDVTDAVHEWLHHKDRNLGFKISLHCPCCTFVPSNNYIIPNKSEELEARFAGIDGTSTYTSGDQKTIKSTRKKNSGKTPHLLLMLLPSYRLESQQSNRRKKRALDAAYCFRNVQDNCCLRPLYIDFKRDLGWKWIHEPKGYNANFCAGACPYLWSSDTQHSRVLSLYNTINPEASASPCCVSQDLEPLTILYYIGKTPKIEQLSNMIVKSCKCS.

The N-terminal stretch at methionine 1–serine 20 is a signal peptide. N-linked (GlcNAc...) asparagine glycans are attached at residues asparagine 72, asparagine 140, and asparagine 241. Intrachain disulfides connect cysteine 309–cysteine 318, cysteine 317–cysteine 380, cysteine 346–cysteine 411, and cysteine 350–cysteine 413.

The protein belongs to the TGF-beta family. In terms of assembly, interacts with the serine proteases, HTRA1 and HTRA3. Interacts with ASPN. Interacts with MFAP5. Interacts with Transforming growth factor beta-2 (TGF-beta-2) chain; interaction is non-covalent and maintains (TGF-beta-2) in a latent state. Interacts with LRRC32/GARP; leading to regulate activation of TGF-beta-2. Interacts with NREP; the interaction results in a decrease in TGFB2 autoinduction. As to quaternary structure, transforming growth factor beta-2: Homodimer; disulfide-linked. Transforming growth factor beta-2: Interacts with TGF-beta receptors (TGFBR1 and TGFBR2), leading to signal transduction. Post-translationally, the precursor proprotein is cleaved in the Golgi apparatus to form Transforming growth factor beta-2 (TGF-beta-2) and Latency-associated peptide (LAP) chains, which remain non-covalently linked, rendering TGF-beta-2 inactive.

It is found in the secreted. The protein resides in the extracellular space. It localises to the extracellular matrix. In terms of biological role, precursor of the Latency-associated peptide (LAP) and Transforming growth factor beta-2 (TGF-beta-2) chains, which constitute the regulatory and active subunit of TGF-beta-2, respectively. Functionally, required to maintain the Transforming growth factor beta-2 (TGF-beta-2) chain in a latent state during storage in extracellular matrix. Associates non-covalently with TGF-beta-2 and regulates its activation via interaction with 'milieu molecules', such as LTBP1 and LRRC32/GARP, that control activation of TGF-beta-2. Multifunctional protein that regulates various processes such as angiogenesis and heart development. Activation into mature form follows different steps: following cleavage of the proprotein in the Golgi apparatus, Latency-associated peptide (LAP) and Transforming growth factor beta-2 (TGF-beta-2) chains remain non-covalently linked rendering TGF-beta-2 inactive during storage in extracellular matrix. At the same time, LAP chain interacts with 'milieu molecules', such as LTBP1 and LRRC32/GARP, that control activation of TGF-beta-2 and maintain it in a latent state during storage in extracellular milieus. Once activated following release of LAP, TGF-beta-2 acts by binding to TGF-beta receptors (TGFBR1 and TGFBR2), which transduce signal. This Mustela putorius furo (European domestic ferret) protein is Transforming growth factor beta-2 proprotein (TGFB2).